Here is a 284-residue protein sequence, read N- to C-terminus: UPF0294 protein VV2535 (284 aa).

It belongs to the UPF0294 family.

The protein localises to the cytoplasm. The polypeptide is UPF0294 protein VV2535 (Vibrio vulnificus (strain YJ016)).